Reading from the N-terminus, the 152-residue chain is Antiholin-like protein LrgA (152 aa).

The next 4 helical transmembrane spans lie at 23-43, 45-65, 77-97, and 108-128; these read YSIFQQALTIAVILLISKIIE, FMPIPMPASVIGLVLLFIALC, VGTALTNNIGFLFVPAGISVI, and ILIILLIIISTLLLLICTGFS.

Belongs to the CidA/LrgA family. LrgA subfamily.

The protein resides in the cell membrane. Functionally, inhibits the expression or activity of extracellular murein hydrolases by interacting, possibly with LrgB, with the holin-like proteins CidA and/or CidB. The LrgAB and CidAB proteins may affect the proton motive force of the membrane. May be involved in programmed cell death (PCD), possibly triggering PCD in response to antibiotics and environmental stresses. This is Antiholin-like protein LrgA from Staphylococcus epidermidis (strain ATCC 12228 / FDA PCI 1200).